Here is a 563-residue protein sequence, read N- to C-terminus: Lipase 2 (563 aa).

The first 19 residues, 1–19 (MVSKSLFLAAAVNLAGVLA), serve as a signal peptide directing secretion. Q20 carries the pyrrolidone carboxylic acid modification. C80 and C124 are disulfide-bonded. The active-site Acyl-ester intermediate is the S236. A disulfide bridge connects residues C295 and C307. An N-linked (GlcNAc...) asparagine glycan is attached at N302. E373 functions as the Charge relay system in the catalytic mechanism. N383 carries N-linked (GlcNAc...) asparagine glycosylation. H482 (charge relay system) is an active-site residue.

It belongs to the type-B carboxylesterase/lipase family. In terms of assembly, monomer.

The protein resides in the secreted. The catalysed reaction is a triacylglycerol + H2O = a diacylglycerol + a fatty acid + H(+). Hydrolyzes all ester bonds in triglyceride and displays a high affinity for triolein. For unsaturated substrates having long fatty acyl chains (C18:2 cis-9, cis-12 and C18:3 cis-9, cis-12, cis-15) GCL I shows higher specific activity than GCL II, whereas GCL II shows higher specific activity against saturated substrates having short fatty acid chains (C8, C10, C12 and C14). The polypeptide is Lipase 2 (LIP2) (Geotrichum candidum (Oospora lactis)).